A 322-amino-acid chain; its full sequence is Large ribosomal subunit protein uL15m (322 aa).

The transit peptide at 1–57 directs the protein to the mitochondrion; that stretch reads MKAERQTGLRNSFTTVIGRKLINTFVPSMMLTSVAGNDIFFRGLFKSPVLAFQSYRY. A disordered region spans residues 69-99; that stretch reads GSTKSFKRLGRGPSSGLGKTSGRGQKGQKAR. Over residues 81-93 the composition is skewed to gly residues; sequence PSSGLGKTSGRGQ.

The protein belongs to the universal ribosomal protein uL15 family. In terms of assembly, component of the mitochondrial large ribosomal subunit (mt-LSU). Mature yeast 74S mitochondrial ribosomes consist of a small (37S) and a large (54S) subunit. The 37S small subunit contains a 15S ribosomal RNA (15S mt-rRNA) and 34 different proteins. The 54S large subunit contains a 21S rRNA (21S mt-rRNA) and 46 different proteins.

It localises to the mitochondrion. Its function is as follows. Component of the mitochondrial ribosome (mitoribosome), a dedicated translation machinery responsible for the synthesis of mitochondrial genome-encoded proteins, including at least some of the essential transmembrane subunits of the mitochondrial respiratory chain. The mitoribosomes are attached to the mitochondrial inner membrane and translation products are cotranslationally integrated into the membrane. The protein is Large ribosomal subunit protein uL15m (MRPL10) of Saccharomyces cerevisiae (strain ATCC 204508 / S288c) (Baker's yeast).